The following is a 150-amino-acid chain: Ribonuclease H (150 aa).

The RNase H type-1 domain maps to 7–148; the sequence is ERPRVEIWTD…VDQLATRGRE (142 aa). Mg(2+) contacts are provided by D16, E54, D76, and D140.

This sequence belongs to the RNase H family. In terms of assembly, monomer. Requires Mg(2+) as cofactor.

It is found in the cytoplasm. It carries out the reaction Endonucleolytic cleavage to 5'-phosphomonoester.. Endonuclease that specifically degrades the RNA of RNA-DNA hybrids. The chain is Ribonuclease H from Gluconobacter oxydans (strain 621H) (Gluconobacter suboxydans).